A 129-amino-acid chain; its full sequence is MNSSTSLMCFALLLISPLCMGYSDEDREADSRRIAEIIQNAQDDDAKINSTQELLDIYRRLYPSLSLEDRENIDKFVNEHTDAIVIDGVPIQGGRKAKIIGKIVSPAAKGLAVGFFEELGSKIAQLFTG.

Residues 1-21 form the signal peptide; it reads MNSSTSLMCFALLLISPLCMG. Asparagine 49 carries an N-linked (GlcNAc...) asparagine glycan.

This sequence belongs to the Turandot family.

The protein localises to the secreted. A humoral factor that plays a role in stress tolerance; gives increased resistance to the lethal effects of bacterial challenge and stress. Regulated by the JAK/STAT pathway and NF-KB-like Relish pathway in the fat body, upd3 in the hemocytes and Mekk1 in response to septic injury and consequent immune response. This chain is Protein Turandot A2 (TotA2), found in Drosophila simulans (Fruit fly).